The following is a 289-amino-acid chain: Acetyl-coenzyme A carboxylase carboxyl transferase subunit beta (289 aa).

The region spanning 28-289 (LWSKCPSCEA…ALLQKLPAAA (262 aa)) is the CoA carboxyltransferase N-terminal domain. Zn(2+)-binding residues include Cys32, Cys35, Cys51, and Cys54. The C4-type zinc finger occupies 32 to 54 (CPSCEAVLYATDLENNLQVCPKC).

It belongs to the AccD/PCCB family. As to quaternary structure, acetyl-CoA carboxylase is a heterohexamer composed of biotin carboxyl carrier protein (AccB), biotin carboxylase (AccC) and two subunits each of ACCase subunit alpha (AccA) and ACCase subunit beta (AccD). Requires Zn(2+) as cofactor.

It is found in the cytoplasm. It catalyses the reaction N(6)-carboxybiotinyl-L-lysyl-[protein] + acetyl-CoA = N(6)-biotinyl-L-lysyl-[protein] + malonyl-CoA. It participates in lipid metabolism; malonyl-CoA biosynthesis; malonyl-CoA from acetyl-CoA: step 1/1. In terms of biological role, component of the acetyl coenzyme A carboxylase (ACC) complex. Biotin carboxylase (BC) catalyzes the carboxylation of biotin on its carrier protein (BCCP) and then the CO(2) group is transferred by the transcarboxylase to acetyl-CoA to form malonyl-CoA. This Dechloromonas aromatica (strain RCB) protein is Acetyl-coenzyme A carboxylase carboxyl transferase subunit beta.